Consider the following 561-residue polypeptide: V-type proton ATPase catalytic subunit A (561 aa).

190–197 provides a ligand contact to ATP; the sequence is GAFGCGKT.

Belongs to the ATPase alpha/beta chains family. V-ATPase is a heteromultimeric enzyme composed of a peripheral catalytic V1 complex (main components: subunits A, B, C, D, E, and F) attached to an integral membrane V0 proton pore complex (main component: the proteolipid protein). High expression in the mesocotyl tip of etiolated seedlings compared to the base.

The enzyme catalyses ATP + H2O + 4 H(+)(in) = ADP + phosphate + 5 H(+)(out). Its function is as follows. Catalytic subunit of the peripheral V1 complex of vacuolar ATPase. V-ATPase vacuolar ATPase is responsible for acidifying a variety of intracellular compartments in eukaryotic cells. The protein is V-type proton ATPase catalytic subunit A of Zea mays (Maize).